Here is a 256-residue protein sequence, read N- to C-terminus: 14-3-3-like protein GF14-C (256 aa).

It belongs to the 14-3-3 family. As to quaternary structure, may form a complex with the transcriptional activator VP1 and the bZIP transcription factor EMBP1. In terms of tissue distribution, expressed in seedlings, internodes and panicles.

It is found in the cytoplasm. Its subcellular location is the nucleus. Its function is as follows. Is associated with a DNA binding complex that binds to the G box, a well-characterized cis-acting DNA regulatory element found in plant genes. The protein is 14-3-3-like protein GF14-C (GF14C) of Oryza sativa subsp. japonica (Rice).